Here is a 369-residue protein sequence, read N- to C-terminus: MDLSIPNPVADTTKQVDGGSPAGGQPQEIDALIVGAGPVGLFQVFELGLLEIKAHVIDSLKVVGGQCVELYPDKPIYDIPAVPICTGQELTDNLLKQIEPFEPTFHLGQEVAVVERREDGRFFVETSLGTRFITKTIFIAAGVGSFQPRTLKVEGIDKFDGKQLFYRVKDPSRFHGRNLVIIGGGDSALDWTLDLVGKAESVVMIHRRDGFRAAPASVAKMKELCEQMEMQFLVGQVGGYEEKDGVLTEIKVTGADGVTRRLPVDDLLVFFGLSPKLGPIAEWGLDLERKQIKVDTEKFETNIPGIFAVGDINTYPGKKKLILSGFHEAALAAFGAAPYIFPEKKIHMQYTTTSPKLHKILGVDSPVFD.

Positions 1 to 23 (MDLSIPNPVADTTKQVDGGSPAG) are disordered. Residues D58, Q66, Y71, V111, F146, D311, and T352 each coordinate FAD.

The protein belongs to the ferredoxin--NADP reductase type 2 family. As to quaternary structure, homodimer. The cofactor is FAD.

It carries out the reaction 2 reduced [2Fe-2S]-[ferredoxin] + NADP(+) + H(+) = 2 oxidized [2Fe-2S]-[ferredoxin] + NADPH. This chain is Ferredoxin--NADP reductase 2, found in Cupriavidus necator (strain ATCC 17699 / DSM 428 / KCTC 22496 / NCIMB 10442 / H16 / Stanier 337) (Ralstonia eutropha).